A 437-amino-acid polypeptide reads, in one-letter code: MKPLIALVGRPNVGKSTLFNRILRQRSAIVDPTPGVTRDRHIAEGEWQGKQFLLMDTGGYNADGDTISMAMLEQTLMAIRDADIVIFLTDVRAGLSYEDLELGRLLQRTFQHKQLFFVVNKVETPQLSLDAESFIKTGFTAPYFISARDGSGVADMLDDILESLPETEKQLQEKESAIQLAVVGRPNVGKSSFVNSLLGSNRLIVSNIPGTTRDAIDSRFIRKQQEFILIDTAGLRKRTKIDAGIEYYSSLRTEKAIERCDVALVMLDAAPGIEKQDMKIINMAVERKKGALLLINKWDLIEKDSKTSKIYEETLRSNMGNLSYVPVLFISALTKKNLYRAIDTAQQISQNRSRKISTSVLNKFLEEALSHTHPSTKSGKELKIKYMTQINAAWPVFAFFCNDPLLVQANFRKFLENKLREHFSLEGVPISMRFMQK.

EngA-type G domains are found at residues 3 to 168 (PLIA…PETE) and 178 to 353 (IQLA…QNRS). GTP contacts are provided by residues 9–16 (GRPNVGKS), 56–60 (DTGGY), 120–123 (NKVE), 184–191 (GRPNVGKS), 231–235 (DTAGL), and 296–299 (NKWD). Residues 354–437 (RKISTSVLNK…VPISMRFMQK (84 aa)) form the KH-like domain.

The protein belongs to the TRAFAC class TrmE-Era-EngA-EngB-Septin-like GTPase superfamily. EngA (Der) GTPase family. Associates with the 50S ribosomal subunit.

Functionally, GTPase that plays an essential role in the late steps of ribosome biogenesis. The chain is GTPase Der from Pelodictyon phaeoclathratiforme (strain DSM 5477 / BU-1).